The primary structure comprises 434 residues: Nicotinate phosphoribosyltransferase (434 aa).

Histidine 242 carries the post-translational modification Phosphohistidine; by autocatalysis.

It belongs to the NAPRTase family. Post-translationally, transiently phosphorylated on a His residue during the reaction cycle. Phosphorylation strongly increases the affinity for substrates and increases the rate of nicotinate D-ribonucleotide production. Dephosphorylation regenerates the low-affinity form of the enzyme, leading to product release.

It carries out the reaction nicotinate + 5-phospho-alpha-D-ribose 1-diphosphate + ATP + H2O = nicotinate beta-D-ribonucleotide + ADP + phosphate + diphosphate. It participates in cofactor biosynthesis; NAD(+) biosynthesis; nicotinate D-ribonucleotide from nicotinate: step 1/1. Catalyzes the synthesis of beta-nicotinate D-ribonucleotide from nicotinate and 5-phospho-D-ribose 1-phosphate at the expense of ATP. The sequence is that of Nicotinate phosphoribosyltransferase from Brucella melitensis biotype 1 (strain ATCC 23456 / CCUG 17765 / NCTC 10094 / 16M).